Consider the following 94-residue polypeptide: Putative regulatory protein THA_332 (94 aa).

The protein belongs to the RemA family.

This Thermosipho africanus (strain TCF52B) protein is Putative regulatory protein THA_332.